Here is a 532-residue protein sequence, read N- to C-terminus: Light-independent protochlorophyllide reductase subunit B (532 aa).

[4Fe-4S] cluster is bound at residue aspartate 36. The Proton donor role is filled by aspartate 292. 428-429 (GL) provides a ligand contact to substrate. A disordered region spans residues 445-486 (EEEEPESISNGHAAAAGSEGGVPDSGEAGDAGDTDGMPWSPD).

This sequence belongs to the ChlB/BchB/BchZ family. Protochlorophyllide reductase is composed of three subunits; BchL, BchN and BchB. Forms a heterotetramer of two BchB and two BchN subunits. [4Fe-4S] cluster is required as a cofactor.

The catalysed reaction is chlorophyllide a + oxidized 2[4Fe-4S]-[ferredoxin] + 2 ADP + 2 phosphate = protochlorophyllide a + reduced 2[4Fe-4S]-[ferredoxin] + 2 ATP + 2 H2O. It functions in the pathway porphyrin-containing compound metabolism; bacteriochlorophyll biosynthesis (light-independent). Component of the dark-operative protochlorophyllide reductase (DPOR) that uses Mg-ATP and reduced ferredoxin to reduce ring D of protochlorophyllide (Pchlide) to form chlorophyllide a (Chlide). This reaction is light-independent. The NB-protein (BchN-BchB) is the catalytic component of the complex. This is Light-independent protochlorophyllide reductase subunit B from Chlorobium phaeobacteroides (strain BS1).